Reading from the N-terminus, the 265-residue chain is Methylthioribulose-1-phosphate dehydratase (265 aa).

Cys118 contacts substrate. Residues His136 and His138 each coordinate Zn(2+). Glu161 serves as the catalytic Proton donor/acceptor. Position 226 (His226) interacts with Zn(2+).

The protein belongs to the aldolase class II family. MtnB subfamily. It depends on Zn(2+) as a cofactor.

The protein localises to the cytoplasm. The catalysed reaction is 5-(methylsulfanyl)-D-ribulose 1-phosphate = 5-methylsulfanyl-2,3-dioxopentyl phosphate + H2O. It participates in amino-acid biosynthesis; L-methionine biosynthesis via salvage pathway; L-methionine from S-methyl-5-thio-alpha-D-ribose 1-phosphate: step 2/6. Catalyzes the dehydration of methylthioribulose-1-phosphate (MTRu-1-P) into 2,3-diketo-5-methylthiopentyl-1-phosphate (DK-MTP-1-P). The sequence is that of Methylthioribulose-1-phosphate dehydratase from Scheffersomyces stipitis (strain ATCC 58785 / CBS 6054 / NBRC 10063 / NRRL Y-11545) (Yeast).